The sequence spans 160 residues: Keratin-associated protein 13-4 (160 aa).

4 tandem repeats follow at residues 41-50, 51-60, 61-70, and 77-86. Positions 41–86 are 4 X 10 AA approximate repeats; the sequence is CQLRSSLYRDCQKTCWEPASCQKSCYRPRTSILCCPCQTTCSGSLG.

This sequence belongs to the PMG family. Interacts with hair keratins.

In the hair cortex, hair keratin intermediate filaments are embedded in an interfilamentous matrix, consisting of hair keratin-associated proteins (KRTAP), which are essential for the formation of a rigid and resistant hair shaft through their extensive disulfide bond cross-linking with abundant cysteine residues of hair keratins. The matrix proteins include the high-sulfur and high-glycine-tyrosine keratins. In Homo sapiens (Human), this protein is Keratin-associated protein 13-4 (KRTAP13-4).